The following is a 213-amino-acid chain: Receptor-binding cancer antigen expressed on SiSo cells (213 aa).

The Extracellular portion of the chain corresponds to 1–6 (MAITQF). The chain crosses the membrane as a helical; Signal-anchor for type III membrane protein span at residues 7 to 27 (RLFKVCTCLATVLSFLKRLIC). The Cytoplasmic portion of the chain corresponds to 28–213 (RSGRGRKLSG…EQNKMGVKLS (186 aa)). A Phosphoserine modification is found at S36. T41 is subject to Phosphothreonine. Phosphotyrosine is present on Y94. Residues 168 to 209 (QAEEVLRQQKIADREKRAAEQQRKKMEKEAQRLLKKEQNKMG) are a coiled coil. The span at 179 to 206 (ADREKRAAEQQRKKMEKEAQRLLKKEQN) shows a compositional bias: basic and acidic residues. Positions 179-213 (ADREKRAAEQQRKKMEKEAQRLLKKEQNKMGVKLS) are disordered.

In terms of assembly, homodimer.

The protein localises to the golgi apparatus membrane. May participate in suppression of cell proliferation and induces apoptotic cell death through activation of interleukin-1-beta converting enzyme (ICE)-like proteases. In Rattus norvegicus (Rat), this protein is Receptor-binding cancer antigen expressed on SiSo cells (Ebag9).